The sequence spans 150 residues: Monooxygenase dmxR10 (150 aa).

Belongs to the avfA family.

The protein operates within secondary metabolite biosynthesis. Monooxygenase; part of the gene cluster that mediates the biosynthesis of the dimeric xanthones cryptosporioptides. The pathway begins with the synthesis of atrochrysone thioester by the polyketide synthase dmx-nrPKS. The atrochrysone carboxyl ACP thioesterase dmxR1 then breaks the thioester bond and releases the atrochrysone carboxylic acid from dmx-nrPKS. Atrochrysone carboxylic acid is decarboxylated by the decarboxylase dmxR15, and oxidized by the anthrone oxygenase dmxR16 to yield emodin. Emodin is then reduced to emodin hydroquinone by the oxidoreductase dmxR7. A-ring reduction by the short chain dehydrogenase dmxR18, dehydration by the scytalone dehydratase-like protein dmxR17 and probable spontaneous re-oxidation, results in overall deoxygenation to chrysophanol. Baeyer-Villiger oxidation by the Baeyer-Villiger monooxygenase (BVMO) dmxR6 then yields monodictylactone in equilibrium with monodictyphenone. In the case of the cryptosporioptides biosynthesis, monodictylactone is reduced at C-12 to an alcohol (by the short chain dehydrogenases dmxR12 or dmxR8) and hydroxylated at C-5 by dmxR9, yielding the electron-rich aromatic which could eliminate H(2)O to form the ortho-quinonemethide, followed by tautomerisation to paraquinone and complete the formal reduction to produce the 10-methylgroup. Conjugate addition of C-4a-OH to the resulting paraquinone by the monooxygenase dmxR10 then gives cyclohexadienone, which is then reduced at C-5 by the short chain dehydrogenase dmxR3 to give the dihydroxanthone. The 6,7-epoxide in the cryptosporioptides could be introduced by the cytochrome P450 monooxygenase dmxL3. The highly reducing PKS dmxL2 manufactures butyrate, which is further carboxylated by dmxL1 to form ethylmalonate. It is not yet clear whether the carboxylation occurs while the butyrate is attached to the ACP of dmxL2, but this unusual fungal metabolite could then be esterified to O-5 by the O-acetyltransferase dmxR13. Finally, dimerization performed by dmxR5 gives the observed dimers cryptosporioptides A, B and C as the final products of the pathway. The protein is Monooxygenase dmxR10 of Cryptosporiopsis sp. (strain 8999).